Here is a 235-residue protein sequence, read N- to C-terminus: Transmembrane emp24 domain-containing protein 9 (235 aa).

The signal sequence occupies residues methionine 1 to alanine 37. At leucine 38–arginine 202 the chain is on the lumenal side. Residues lysine 47–valine 145 form the GOLD domain. The interval cysteine 121–lysine 160 is required for interaction with STX17. Asparagine 125 carries N-linked (GlcNAc...) asparagine glycosylation. Residues glutamate 154 to tyrosine 184 are a coiled coil. Residue lysine 160 is modified to N6-acetyllysine. A helical membrane pass occupies residues valine 203 to methionine 222. Over arginine 223–valine 235 the chain is Cytoplasmic. Residues phenylalanine 228–phenylalanine 229 carry the COPII vesicle coat-binding motif. Positions phenylalanine 228–valine 235 match the COPI vesicle coat-binding motif.

This sequence belongs to the EMP24/GP25L family. As to quaternary structure, monomer and homodimer in endoplasmic reticulum. Predominantly monomeric and to lesser extent homodimeric in endoplasmic reticulum-Golgi intermediate compartment and cis-Golgi network. Probably oligomerizes with other members of the EMP24/GP25L family such as TMED2, TMED7 and TMED10. Interacts with TMED5. Interacts (via C-terminus) with COPG1; the interaction involves dimeric TMED9. Interacts with PTPN2 and SPAST. Interacts with STX17; the interaction is direct. N-linked glycosylated containing high mannose.

Its subcellular location is the endoplasmic reticulum membrane. It is found in the golgi apparatus. The protein localises to the cis-Golgi network membrane. It localises to the endoplasmic reticulum-Golgi intermediate compartment membrane. The protein resides in the trans-Golgi network membrane. Its function is as follows. Appears to be involved in vesicular protein trafficking, mainly in the early secretory pathway. In COPI vesicle-mediated retrograde transport involved in the coatomer recruitment to membranes of the early secretory pathway. Increases coatomer-dependent activity of ARFGAP2. Thought to play a crucial role in the specific retention of p24 complexes in cis-Golgi membranes; specifically contributes to the coupled localization of TMED2 and TMED10 in the cis-Golgi network. May be involved in organization of intracellular membranes, such as of the ER-Golgi intermediate compartment and the Golgi apparatus. Involved in ER localization of PTPN2. This Rattus norvegicus (Rat) protein is Transmembrane emp24 domain-containing protein 9 (Tmed9).